The primary structure comprises 271 residues: Tryptophan synthase alpha chain (271 aa).

Active-site proton acceptor residues include glutamate 49 and aspartate 60.

It belongs to the TrpA family. As to quaternary structure, tetramer of two alpha and two beta chains.

It carries out the reaction (1S,2R)-1-C-(indol-3-yl)glycerol 3-phosphate + L-serine = D-glyceraldehyde 3-phosphate + L-tryptophan + H2O. It participates in amino-acid biosynthesis; L-tryptophan biosynthesis; L-tryptophan from chorismate: step 5/5. Its function is as follows. The alpha subunit is responsible for the aldol cleavage of indoleglycerol phosphate to indole and glyceraldehyde 3-phosphate. In Blochmanniella floridana, this protein is Tryptophan synthase alpha chain.